Reading from the N-terminus, the 216-residue chain is Cytidylate kinase (216 aa).

7–15 contacts ATP; that stretch reads GPSGTGKST.

It belongs to the cytidylate kinase family. Type 1 subfamily.

It is found in the cytoplasm. It carries out the reaction CMP + ATP = CDP + ADP. It catalyses the reaction dCMP + ATP = dCDP + ADP. The protein is Cytidylate kinase of Chlamydia trachomatis serovar L2 (strain ATCC VR-902B / DSM 19102 / 434/Bu).